The following is a 259-amino-acid chain: Tryptophan synthase alpha chain (259 aa).

Catalysis depends on proton acceptor residues Glu-48 and Asp-59.

Belongs to the TrpA family. As to quaternary structure, tetramer of two alpha and two beta chains.

It carries out the reaction (1S,2R)-1-C-(indol-3-yl)glycerol 3-phosphate + L-serine = D-glyceraldehyde 3-phosphate + L-tryptophan + H2O. Its pathway is amino-acid biosynthesis; L-tryptophan biosynthesis; L-tryptophan from chorismate: step 5/5. The alpha subunit is responsible for the aldol cleavage of indoleglycerol phosphate to indole and glyceraldehyde 3-phosphate. This chain is Tryptophan synthase alpha chain, found in Syntrophomonas wolfei subsp. wolfei (strain DSM 2245B / Goettingen).